A 287-amino-acid chain; its full sequence is Probable endonuclease 4 (287 aa).

Zn(2+) contacts are provided by H69, H109, E144, D178, H181, H215, D228, H230, and E260.

It belongs to the AP endonuclease 2 family. Zn(2+) serves as cofactor.

It catalyses the reaction Endonucleolytic cleavage to 5'-phosphooligonucleotide end-products.. Its function is as follows. Endonuclease IV plays a role in DNA repair. It cleaves phosphodiester bonds at apurinic or apyrimidinic (AP) sites, generating a 3'-hydroxyl group and a 5'-terminal sugar phosphate. In Thermotoga petrophila (strain ATCC BAA-488 / DSM 13995 / JCM 10881 / RKU-1), this protein is Probable endonuclease 4.